The following is a 166-amino-acid chain: uncharacterized protein (166 aa).

4 consecutive transmembrane segments (helical) span residues 7 to 27 (VLFK…SLFY), 30 to 50 (FLFA…YCYI), 69 to 89 (IETL…KSLL), and 92 to 112 (NSFF…LVLF).

To M.jannaschii MJ0795.1 and MJ0785.1.

Its subcellular location is the cell membrane. This is an uncharacterized protein from Methanocaldococcus jannaschii (strain ATCC 43067 / DSM 2661 / JAL-1 / JCM 10045 / NBRC 100440) (Methanococcus jannaschii).